The chain runs to 354 residues: 3-isopropylmalate dehydrogenase (354 aa).

76-87 contacts NAD(+); the sequence is GPRWDGAKERPE. Residues Arg94, Arg104, Arg130, and Asp215 each contribute to the substrate site. Positions 215, 239, and 243 each coordinate Mg(2+). 273–285 provides a ligand contact to NAD(+); sequence GSAPDIAGKNKAN.

The protein belongs to the isocitrate and isopropylmalate dehydrogenases family. LeuB type 1 subfamily. In terms of assembly, homodimer. Requires Mg(2+) as cofactor. Mn(2+) is required as a cofactor.

The protein resides in the cytoplasm. It catalyses the reaction (2R,3S)-3-isopropylmalate + NAD(+) = 4-methyl-2-oxopentanoate + CO2 + NADH. Its pathway is amino-acid biosynthesis; L-leucine biosynthesis; L-leucine from 3-methyl-2-oxobutanoate: step 3/4. Catalyzes the oxidation of 3-carboxy-2-hydroxy-4-methylpentanoate (3-isopropylmalate) to 3-carboxy-4-methyl-2-oxopentanoate. The product decarboxylates to 4-methyl-2 oxopentanoate. This chain is 3-isopropylmalate dehydrogenase, found in Bacillus thuringiensis subsp. konkukian (strain 97-27).